The sequence spans 431 residues: UDP-N-acetylglucosamine 1-carboxyvinyltransferase (431 aa).

22 to 23 (KN) contributes to the phosphoenolpyruvate binding site. UDP-N-acetyl-alpha-D-glucosamine is bound at residue Arg-102. The active-site Proton donor is Cys-126. The residue at position 126 (Cys-126) is a 2-(S-cysteinyl)pyruvic acid O-phosphothioketal. UDP-N-acetyl-alpha-D-glucosamine-binding residues include Asp-318 and Ile-340.

It belongs to the EPSP synthase family. MurA subfamily.

Its subcellular location is the cytoplasm. It catalyses the reaction phosphoenolpyruvate + UDP-N-acetyl-alpha-D-glucosamine = UDP-N-acetyl-3-O-(1-carboxyvinyl)-alpha-D-glucosamine + phosphate. The protein operates within cell wall biogenesis; peptidoglycan biosynthesis. Functionally, cell wall formation. Adds enolpyruvyl to UDP-N-acetylglucosamine. The sequence is that of UDP-N-acetylglucosamine 1-carboxyvinyltransferase from Bartonella henselae (strain ATCC 49882 / DSM 28221 / CCUG 30454 / Houston 1) (Rochalimaea henselae).